The primary structure comprises 785 residues: Endonuclease MutS2 (785 aa).

Residue 335-342 (GPNTGGKT) coordinates ATP. In terms of domain architecture, Smr spans 710 to 785 (LDLRGERYED…GNGVTIVEFK (76 aa)).

It belongs to the DNA mismatch repair MutS family. MutS2 subfamily. In terms of assembly, homodimer. Binds to stalled ribosomes, contacting rRNA.

Endonuclease that is involved in the suppression of homologous recombination and thus may have a key role in the control of bacterial genetic diversity. Functionally, acts as a ribosome collision sensor, splitting the ribosome into its 2 subunits. Detects stalled/collided 70S ribosomes which it binds and splits by an ATP-hydrolysis driven conformational change. Acts upstream of the ribosome quality control system (RQC), a ribosome-associated complex that mediates the extraction of incompletely synthesized nascent chains from stalled ribosomes and their subsequent degradation. Probably generates substrates for RQC. In Listeria monocytogenes serotype 4a (strain HCC23), this protein is Endonuclease MutS2.